A 183-amino-acid chain; its full sequence is uncharacterized protein (183 aa).

Residues 136 to 183 (EPPASVPSKQSGRSDKKKSTRKSPTFRNRPDFRKNKGRQLNKTTKQKK) form a disordered region. The span at 170–183 (NKGRQLNKTTKQKK) shows a compositional bias: basic residues.

This is an uncharacterized protein from Homo sapiens (Human).